Reading from the N-terminus, the 617-residue chain is Proline--tRNA ligase (617 aa).

The protein belongs to the class-II aminoacyl-tRNA synthetase family. ProS type 1 subfamily. Homodimer.

It is found in the cytoplasm. It carries out the reaction tRNA(Pro) + L-proline + ATP = L-prolyl-tRNA(Pro) + AMP + diphosphate. Catalyzes the attachment of proline to tRNA(Pro) in a two-step reaction: proline is first activated by ATP to form Pro-AMP and then transferred to the acceptor end of tRNA(Pro). As ProRS can inadvertently accommodate and process non-cognate amino acids such as alanine and cysteine, to avoid such errors it has two additional distinct editing activities against alanine. One activity is designated as 'pretransfer' editing and involves the tRNA(Pro)-independent hydrolysis of activated Ala-AMP. The other activity is designated 'posttransfer' editing and involves deacylation of mischarged Ala-tRNA(Pro). The misacylated Cys-tRNA(Pro) is not edited by ProRS. The polypeptide is Proline--tRNA ligase (Streptococcus pneumoniae serotype 19F (strain G54)).